The chain runs to 142 residues: Peptide methionine sulfoxide reductase MsrB (142 aa).

The region spanning 2–125 (IKKNKEELND…NSAAIQFIPY (124 aa)) is the MsrB domain. The Nucleophile role is filled by Cys114.

This sequence belongs to the MsrB Met sulfoxide reductase family.

The catalysed reaction is L-methionyl-[protein] + [thioredoxin]-disulfide + H2O = L-methionyl-(R)-S-oxide-[protein] + [thioredoxin]-dithiol. The polypeptide is Peptide methionine sulfoxide reductase MsrB (Staphylococcus epidermidis (strain ATCC 35984 / DSM 28319 / BCRC 17069 / CCUG 31568 / BM 3577 / RP62A)).